Reading from the N-terminus, the 56-residue chain is UPF0391 membrane protein PSHAa0537 (56 aa).

A run of 2 helical transmembrane segments spans residues 6 to 26 (ITFLVIALIAAVLGFGGIAGA) and 27 to 47 (AAGIAKIIFFIFLILLVISLV).

The protein belongs to the UPF0391 family.

The protein resides in the cell membrane. The polypeptide is UPF0391 membrane protein PSHAa0537 (Pseudoalteromonas translucida (strain TAC 125)).